The chain runs to 341 residues: tRNA N6-adenosine threonylcarbamoyltransferase (341 aa).

Fe cation-binding residues include H120 and H124. Substrate-binding positions include 142–146, D175, G188, D192, and N281; that span reads VVSGG. A Fe cation-binding site is contributed by D310.

The protein belongs to the KAE1 / TsaD family. It depends on Fe(2+) as a cofactor.

It is found in the cytoplasm. The enzyme catalyses L-threonylcarbamoyladenylate + adenosine(37) in tRNA = N(6)-L-threonylcarbamoyladenosine(37) in tRNA + AMP + H(+). Its function is as follows. Required for the formation of a threonylcarbamoyl group on adenosine at position 37 (t(6)A37) in tRNAs that read codons beginning with adenine. Is involved in the transfer of the threonylcarbamoyl moiety of threonylcarbamoyl-AMP (TC-AMP) to the N6 group of A37, together with TsaE and TsaB. TsaD likely plays a direct catalytic role in this reaction. This chain is tRNA N6-adenosine threonylcarbamoyltransferase, found in Anoxybacillus flavithermus (strain DSM 21510 / WK1).